We begin with the raw amino-acid sequence, 397 residues long: Tryptophan synthase beta chain (397 aa).

Lys-87 is modified (N6-(pyridoxal phosphate)lysine).

The protein belongs to the TrpB family. In terms of assembly, tetramer of two alpha and two beta chains. The cofactor is pyridoxal 5'-phosphate.

It carries out the reaction (1S,2R)-1-C-(indol-3-yl)glycerol 3-phosphate + L-serine = D-glyceraldehyde 3-phosphate + L-tryptophan + H2O. Its pathway is amino-acid biosynthesis; L-tryptophan biosynthesis; L-tryptophan from chorismate: step 5/5. Functionally, the beta subunit is responsible for the synthesis of L-tryptophan from indole and L-serine. The protein is Tryptophan synthase beta chain of Escherichia coli O127:H6 (strain E2348/69 / EPEC).